The sequence spans 761 residues: MKHTDIEVTLTHAEEHGLSAEEFSQICTILGRTPTITELGIFSVMWSEHCSYKNSIAVLKTLPREGGALLTSAGEENAGLVDIGDNLAVAFKIESHNHPSAVEPYQGAATGVGGIHRDIFTMGARPVASLNSLRFGSPKDPRVRYLVDGVVRGIGDYGNSFGVPTVAGDIYFEEGYTGNPLVNAMSVGIVEHHKTVSATAYGTGNPVLIVGSSTGRDGIHGATFASEDLSEASEEKRPSVQVGDPFAEKLLLEATLEAIETGYVVGLQDMGAAGITSSTSEMSARGIEKYGVGGIEIDLDLVPIREAGMSAYEIMLSESQERMLIVAAKGFEDKIIEVYQKWDVQAVVIGEVTDDNHVRVKHQGQVVANIPAISLVLGGGAPVYKREAKEKKPETPLANMVADSTLNFNELGLALLSRPNIASKQWVYRQYDSMVQTNTLTPTGQTDAAVIRIKGTNKGVAMKTDCNARYVYLNPLAGGKIAVAECARNIACTGARPLAITNCLNFGNPLKPEVYFQFKESVRGMGEACRTFNTPVTGGNVSFYNETFIAGQRTAIYPTPMIGMIGLLDNIENLVGSTFTASGDRILLLGNPQLTLDGSEYLVMQYGTPGQDAPAVDLEHEAQLQRLLVALAEQKLLHSAHDVSDGGLLVALAEKAMMNQEMPLSFRVHLSNNDKSETAIQQQLFSEAQGRVVLSAAPEAVAAIMALANDYNLPIQDIGEVVNQQTISLSINEQEVVNLPLSNVAHAYYHALEHALHLDEL.

The active site involves histidine 49. ATP is bound by residues tyrosine 52 and lysine 92. Residue glutamate 94 coordinates Mg(2+). Substrate-binding positions include 95–98 (SHNH) and arginine 117. Histidine 96 acts as the Proton acceptor in catalysis. Position 118 (aspartate 118) interacts with Mg(2+). Glutamine 241 serves as a coordination point for substrate. A Mg(2+)-binding site is contributed by aspartate 269. Substrate is bound at residue 318–320 (ESQ). Positions 502 and 539 each coordinate ATP. Asparagine 540 is a binding site for Mg(2+). Position 542 (serine 542) interacts with substrate.

This sequence belongs to the FGAMS family. As to quaternary structure, monomer. Part of the FGAM synthase complex composed of 1 PurL, 1 PurQ and 2 PurS subunits.

It localises to the cytoplasm. The enzyme catalyses N(2)-formyl-N(1)-(5-phospho-beta-D-ribosyl)glycinamide + L-glutamine + ATP + H2O = 2-formamido-N(1)-(5-O-phospho-beta-D-ribosyl)acetamidine + L-glutamate + ADP + phosphate + H(+). It functions in the pathway purine metabolism; IMP biosynthesis via de novo pathway; 5-amino-1-(5-phospho-D-ribosyl)imidazole from N(2)-formyl-N(1)-(5-phospho-D-ribosyl)glycinamide: step 1/2. Functionally, part of the phosphoribosylformylglycinamidine synthase complex involved in the purines biosynthetic pathway. Catalyzes the ATP-dependent conversion of formylglycinamide ribonucleotide (FGAR) and glutamine to yield formylglycinamidine ribonucleotide (FGAM) and glutamate. The FGAM synthase complex is composed of three subunits. PurQ produces an ammonia molecule by converting glutamine to glutamate. PurL transfers the ammonia molecule to FGAR to form FGAM in an ATP-dependent manner. PurS interacts with PurQ and PurL and is thought to assist in the transfer of the ammonia molecule from PurQ to PurL. This Chlorobium chlorochromatii (strain CaD3) protein is Phosphoribosylformylglycinamidine synthase subunit PurL.